Reading from the N-terminus, the 629-residue chain is (-)-alpha pinene synthase 1, chloroplastic (629 aa).

Residues 1–48 (MSPVSVISLPSDLCLPTSFIDRSGRELNPLHITIPNVAMRRQGKLMTR) constitute a chloroplast transit peptide. Positions 380, 384, and 532 each coordinate Mg(2+). Positions 380–384 (DDMYD) match the DDXXD motif motif.

The protein belongs to the terpene synthase family. Tpsd subfamily. It depends on Mg(2+) as a cofactor. Mn(2+) serves as cofactor.

The protein localises to the plastid. It localises to the chloroplast. The enzyme catalyses (2E)-geranyl diphosphate = (1S,5S)-alpha-pinene + diphosphate. It catalyses the reaction (2E)-geranyl diphosphate = (1S,5S)-beta-pinene + diphosphate. Its pathway is terpene metabolism; oleoresin biosynthesis. It participates in secondary metabolite biosynthesis; terpenoid biosynthesis. Its function is as follows. Monoterpene synthase (TPS) involved in the biosynthesis of monoterpene natural products included in conifer oleoresin secretions and volatile emissions; these compounds contribute to biotic and abiotic stress defense against herbivores and pathogens. Catalyzes the conversion of (2E)-geranyl diphosphate (GPP) to (-)-alpha-pinene and, to a lower extent, to (-)-beta-pinene. In Pinus contorta (Shore pine), this protein is (-)-alpha pinene synthase 1, chloroplastic.